The following is a 969-amino-acid chain: Putative zinc protease mug138 (969 aa).

A Zn(2+)-binding site is contributed by His68. Glu71 (proton acceptor) is an active-site residue. The Zn(2+) site is built by His72 and Glu149.

It belongs to the peptidase M16 family.

It is found in the cytoplasm. In terms of biological role, has a role in meiosis. This chain is Putative zinc protease mug138 (mug138), found in Schizosaccharomyces pombe (strain 972 / ATCC 24843) (Fission yeast).